Consider the following 246-residue polypeptide: tRNA (guanine-N(1)-)-methyltransferase (246 aa).

S-adenosyl-L-methionine is bound by residues Gly117 and 137–142 (IGDYVL).

Belongs to the RNA methyltransferase TrmD family. In terms of assembly, homodimer.

The protein localises to the cytoplasm. It carries out the reaction guanosine(37) in tRNA + S-adenosyl-L-methionine = N(1)-methylguanosine(37) in tRNA + S-adenosyl-L-homocysteine + H(+). Its function is as follows. Specifically methylates guanosine-37 in various tRNAs. The sequence is that of tRNA (guanine-N(1)-)-methyltransferase from Acinetobacter baumannii (strain ACICU).